The chain runs to 692 residues: Formate hydrogenlyase transcriptional activator (692 aa).

Positions 202–344 (DIDELVSEVA…QIAERVAIAV (143 aa)) constitute a GAF domain. The Sigma-54 factor interaction domain maps to 381-610 (IIGRSEAMYN…LENVVERAVL (230 aa)). ATP is bound by residues 409–416 (GETGTGKE) and 472–481 (ADKSSLFLDE). A DNA-binding region (H-T-H motif) is located at residues 663–682 (PKGAAQRLGLKRTTLLSRMK).

Functionally, required for induction of expression of the formate dehydrogenase H and hydrogenase-3 structural genes. In Salmonella typhimurium (strain SL1344), this protein is Formate hydrogenlyase transcriptional activator (fhlA).